A 100-amino-acid chain; its full sequence is NADH-quinone oxidoreductase subunit K (100 aa).

A run of 3 helical transmembrane segments spans residues 3–23 (LNAYLVLAAMLFTIGVFGIFL), 29–49 (ISIMMSIELMLLAVNINFVAF), and 60–80 (IFTFFVVTVAAAEAAIGLAIL).

It belongs to the complex I subunit 4L family. As to quaternary structure, NDH-1 is composed of 14 different subunits. Subunits NuoA, H, J, K, L, M, N constitute the membrane sector of the complex.

The protein localises to the cell inner membrane. The catalysed reaction is a quinone + NADH + 5 H(+)(in) = a quinol + NAD(+) + 4 H(+)(out). Functionally, NDH-1 shuttles electrons from NADH, via FMN and iron-sulfur (Fe-S) centers, to quinones in the respiratory chain. The immediate electron acceptor for the enzyme in this species is believed to be ubiquinone. Couples the redox reaction to proton translocation (for every two electrons transferred, four hydrogen ions are translocated across the cytoplasmic membrane), and thus conserves the redox energy in a proton gradient. In Magnetococcus marinus (strain ATCC BAA-1437 / JCM 17883 / MC-1), this protein is NADH-quinone oxidoreductase subunit K.